Consider the following 353-residue polypeptide: Jasmonate-induced oxygenase 4 (353 aa).

The region spanning 202–302 is the Fe2OG dioxygenase domain; it reads VGASLRTNFY…RVSLAFFYNP (101 aa). A jasmonate-binding site is contributed by R207. 2 residues coordinate 2-oxoglutarate: N209 and Y211. The Fe cation site is built by H226, D228, and H283. 2-oxoglutarate contacts are provided by R293 and S295. Jasmonate-binding residues include R332 and R336.

It belongs to the iron/ascorbate-dependent oxidoreductase family. The cofactor is L-ascorbate. Requires Fe(2+) as cofactor.

The enzyme catalyses jasmonate + 2-oxoglutarate + O2 = (1R,2R)-12-hydroxyjasmonate + succinate + CO2. 2-oxoglutarate-dependent dioxygenase involved in the oxidation of jasmonate (JA), a stress-induced phytohormone synthesized in response to attack by pathogens and herbivores, which triggers the activation of defense responses via the JA-mediated signaling pathway. Converts JA to 12-hydroxyjasmonate (12OH-JA), an inactive form of JA. Is specific to free JA, and cannot oxidize the bioactive form jasmonoyl-L-isoleucine (JA-Ile) or other JA-amino acid conjugates. Prevents over-accumulation of JA and indirectly its bioactive form JA-Ile under stress response. Acts as a negative regulator of JA-mediated defense signaling, by contributing to 12OH-JA accumulation, which represses JA defense responses upon infection by the fungal pathogen Botrytis cinerea. Acts as a negative regulator of JA-mediated defense responses upon infestation by the herbivorous caterpillar Mamestra brassicae. The protein is Jasmonate-induced oxygenase 4 of Arabidopsis thaliana (Mouse-ear cress).